The following is a 259-amino-acid chain: Protein CDI (259 aa).

Residues 236–259 (FADLWLNEMEEYNKENKKEADNAK) adopt a coiled-coil conformation.

In terms of tissue distribution, mostly expressed in pollen grains and pollen tubes, and, at low levels, in seedlings, roots, stems, leaves, flowers and siliques.

It localises to the cytoplasm. Its subcellular location is the cytosol. Its function is as follows. Probable nucleotide-diphospho-sugar transferase required for pollen germination and tube growth. The protein is Protein CDI of Arabidopsis thaliana (Mouse-ear cress).